Consider the following 305-residue polypeptide: Mitochondrial uncoupling protein 3 (305 aa).

Solcar repeat units follow at residues 14 to 100 (TRIL…LKGL), 112 to 204 (LPLA…AKHF), and 213 to 299 (DNIF…FRLL). 6 helical membrane passes run 16–36 (ILLASLSAMVAESVTFPIDLT), 69–89 (VIGLYKGLSPAIIRHLFYTPI), 118–138 (ALVGGFSGVIAQVVASPADLV), 178–198 (KGVLPNIQRAFLVNMGELACY), 219–239 (TLASIMSGLASTSLSCPADVV), and 272–292 (WKGFFPTWARLGPWQFVFWVS).

This sequence belongs to the mitochondrial carrier (TC 2.A.29) family.

The protein localises to the mitochondrion inner membrane. Its function is as follows. PUMPS are mitochondrial transporter proteins that create proton leaks across the inner mitochondrial membrane, thus uncoupling oxidative phosphorylation. This leads to a decrease in the efficiency of oxidative phosphorylation and an increase in heat production. May be involved in protecting plant cells against oxidative stress damage. The sequence is that of Mitochondrial uncoupling protein 3 (PUMP3) from Arabidopsis thaliana (Mouse-ear cress).